Consider the following 590-residue polypeptide: MCGIVACILKDGSAAPVLLECVRRLEYRGYDSVGIATSDPMIRIKKDSGKIDEVDAELDLADLPGTMGIAHVRWATHGLPTAENAHPHTDCSGEIAVVHNGIIENYLEVKEELESEGHIFRSETDTEVIPHLIEKYMDEGMDLEAATATALRKLRGAYAIAAVSSREPGRIVGARKESPLIVGVGEGEYFLASDVPAILNHTSRVIYLDDGEMVILDGDLRVTDMEGNTVEKEVHSIDWSADMAEKGGYDHFMLKEIHEEPSAVRDTLTEWDEVLGVVEEIGEVERICFVACGTSYHASLVGKYLFESLLGIPTDVILASEFRYSAGALNDRTLAIFISQSGETADTLNALRAANSRAKTLAIVNVLGSSATREAQHVLYTRAGPEIGVAATKTYVSQLTVIYMLVAAMGAPELMDRLERVPEFMERALEDEDGIKELAATCSDVSDFFFIGRGFAYPTALEGALKLKEITYIHGEGYAAGELKHGPLALIDNGVPVVAISPPGPCHDKTLSNVEEVRARGARVIGVGSISDESLRKEADDFIGLDPEVDDVISPLVYIVPLQLLSYHVSVERGLDPDKPKNLAKCVTVE.

C2 functions as the Nucleophile; for GATase activity in the catalytic mechanism. Residues 2-219 (CGIVACILKD…DGEMVILDGD (218 aa)) enclose the Glutamine amidotransferase type-2 domain. 2 SIS domains span residues 277–415 (VVEE…PELM) and 438–580 (LAAT…PDKP). K585 serves as the catalytic For Fru-6P isomerization activity.

Homodimer.

The protein resides in the cytoplasm. It carries out the reaction D-fructose 6-phosphate + L-glutamine = D-glucosamine 6-phosphate + L-glutamate. In terms of biological role, catalyzes the first step in hexosamine metabolism, converting fructose-6P into glucosamine-6P using glutamine as a nitrogen source. This chain is Glutamine--fructose-6-phosphate aminotransferase [isomerizing], found in Methanothermobacter thermautotrophicus (strain ATCC 29096 / DSM 1053 / JCM 10044 / NBRC 100330 / Delta H) (Methanobacterium thermoautotrophicum).